Consider the following 194-residue polypeptide: Orotate phosphoribosyltransferase (194 aa).

Residues Lys98 and 122-130 (EDVLTTGGS) each bind 5-phospho-alpha-D-ribose 1-diphosphate. Residues Thr126 and Arg154 each contribute to the orotate site.

It belongs to the purine/pyrimidine phosphoribosyltransferase family. PyrE subfamily. In terms of assembly, homodimer. The cofactor is Mg(2+).

The enzyme catalyses orotidine 5'-phosphate + diphosphate = orotate + 5-phospho-alpha-D-ribose 1-diphosphate. It participates in pyrimidine metabolism; UMP biosynthesis via de novo pathway; UMP from orotate: step 1/2. Functionally, catalyzes the transfer of a ribosyl phosphate group from 5-phosphoribose 1-diphosphate to orotate, leading to the formation of orotidine monophosphate (OMP). The polypeptide is Orotate phosphoribosyltransferase (Deinococcus radiodurans (strain ATCC 13939 / DSM 20539 / JCM 16871 / CCUG 27074 / LMG 4051 / NBRC 15346 / NCIMB 9279 / VKM B-1422 / R1)).